The following is an 85-amino-acid chain: RNA-binding protein Hfq (85 aa).

The Sm domain maps to 9-68; that stretch reads DPFLNALRRERIPVSIYLVNGIKLQGQIESFDQFVILLKNTVNQMVYKHAISTVVPARPV. The tract at residues 66 to 85 is disordered; that stretch reads RPVNHHHASDRPATLEKTEE. Positions 72 to 85 are enriched in basic and acidic residues; it reads HASDRPATLEKTEE.

Belongs to the Hfq family. As to quaternary structure, homohexamer.

Its function is as follows. RNA chaperone that binds small regulatory RNA (sRNAs) and mRNAs to facilitate mRNA translational regulation in response to envelope stress, environmental stress and changes in metabolite concentrations. Also binds with high specificity to tRNAs. This Photobacterium profundum (strain SS9) protein is RNA-binding protein Hfq.